The sequence spans 492 residues: Peptidyl-prolyl cis-trans isomerase-like 4 (492 aa).

The PPIase cyclophilin-type domain occupies 1–161 (MAVLLETTLG…QDIRINHTVI (161 aa)). Positions 167 to 188 (DDPPDLLIPDRSPEPTREQLDS) are disordered. The segment covering 177-187 (RSPEPTREQLD) has biased composition (basic and acidic residues). Serine 178 is modified (phosphoserine). Position 182 is a phosphothreonine (threonine 182). Glycyl lysine isopeptide (Lys-Gly) (interchain with G-Cter in SUMO2) cross-links involve residues lysine 201, lysine 212, and lysine 218. Positions 240–318 (NVLFVCKLNP…RRIHVDFSQS (79 aa)) constitute an RRM domain. Residues lysine 321 and lysine 362 each participate in a glycyl lysine isopeptide (Lys-Gly) (interchain with G-Cter in SUMO2) cross-link. Disordered stretches follow at residues 368-406 (DEQA…PIKN) and 423-492 (EESC…SKYR). Positions 377 to 390 (SHSHTSKKHKKKTH) are enriched in basic residues. Serine 393 bears the Phosphoserine mark. Lysine 405 participates in a covalent cross-link: Glycyl lysine isopeptide (Lys-Gly) (interchain with G-Cter in SUMO2). A compositionally biased stretch (basic and acidic residues) spans 426 to 452 (CWEKQKSEKRDRTQNRSRSRSRERDGH). Residue lysine 460 forms a Glycyl lysine isopeptide (Lys-Gly) (interchain with G-Cter in SUMO2) linkage. Serine 471 is subject to Phosphoserine. Residues 482–492 (KSKDKEKSKYR) are compositionally biased toward basic and acidic residues.

This sequence belongs to the cyclophilin-type PPIase family. PPIL4 subfamily. As to expression, abundantly expressed in kidney but has a ubiquitously low expression pattern in other adult tissues.

It is found in the nucleus. The enzyme catalyses [protein]-peptidylproline (omega=180) = [protein]-peptidylproline (omega=0). Functionally, PPIases accelerate the folding of proteins. It catalyzes the cis-trans isomerization of proline imidic peptide bonds in oligopeptides. In Homo sapiens (Human), this protein is Peptidyl-prolyl cis-trans isomerase-like 4 (PPIL4).